Here is a 359-residue protein sequence, read N- to C-terminus: MPSISKTKSGERYRAPTDQARKMDRKKENKRNKKDRQQIRQAMAKYCNLDETTSKLLALERQILGLDPQPFHIDVLRKKQKVLTDSINKRRMTLQQGKEDAELKKFNDKINAYQSDCQKLAVLAQQARLAREADPDMIPLPMGDVSTAGPERNNQLLAPAMIKRKVEFQLPPRPVRVAGQKPPGPPCGLAPNFSDSEEEEEEVHDDHYDDIDLAPVPIPEFDNPYQPIHRNYGPPSSYNSMPTRMPHHHHHHHPHASSHYNPMGFQNHHEEAVISSAPQINRSNEPAAPATLSAAPELRNLRRETVKLVPAQLLRRPGDNKTIVPRQAAPVQRRPEVQKQAKNTDEAYNDFMKELDGLI.

3 disordered regions span residues 1 to 38 (MPSI…DRQQ), 235 to 264 (PSSY…NPMG), and 317 to 341 (PGDN…QKQA). Residues 8–27 (KSGERYRAPTDQARKMDRKK) are compositionally biased toward basic and acidic residues. Residues 245–256 (MPHHHHHHHPHA) are compositionally biased toward basic residues.

In terms of biological role, activates pre-mRNA splicing. May inhibit PP1 phosphatase activity. This is WW domain-binding protein wbp-11 from Caenorhabditis elegans.